The chain runs to 33 residues: Gaegurin-3 (33 aa).

C27 and C33 are disulfide-bonded.

Belongs to the frog skin active peptide (FSAP) family. Brevinin subfamily. Monomer. As to expression, expressed by the skin glands.

It localises to the secreted. Its function is as follows. Has a non-hemolytic activity. Has a broad spectrum of activity against both Gram-positive and Gram-negative bacteria, fungi and protozoa. This chain is Gaegurin-3 (GGN3), found in Glandirana rugosa (Japanese wrinkled frog).